The sequence spans 279 residues: Probable ribosomal RNA small subunit methyltransferase A (279 aa).

S-adenosyl-L-methionine contacts are provided by Asn23, Leu25, Gly50, Glu71, Asp95, and Asn110.

This sequence belongs to the class I-like SAM-binding methyltransferase superfamily. rRNA adenine N(6)-methyltransferase family. RsmA subfamily.

Its subcellular location is the cytoplasm. Specifically dimethylates two adjacent adenosines in the loop of a conserved hairpin near the 3'-end of 16S rRNA in the 30S particle. May play a critical role in biogenesis of 30S subunits. This Thermococcus kodakarensis (strain ATCC BAA-918 / JCM 12380 / KOD1) (Pyrococcus kodakaraensis (strain KOD1)) protein is Probable ribosomal RNA small subunit methyltransferase A.